We begin with the raw amino-acid sequence, 169 residues long: PTS system glucose-specific EIIA component (169 aa).

In terms of domain architecture, PTS EIIA type-1 spans 39-143; that stretch reads DVVFAEKIVG…STLTPVVISN (105 aa). Zn(2+) is bound by residues H76 and H91. Catalysis depends on H91, which acts as the Tele-phosphohistidine intermediate; for EIIA activity. Phosphohistidine; by HPr is present on H91.

In terms of assembly, heterodimer with glycerol kinase (glpk). The cofactor is Zn(2+).

It is found in the cytoplasm. Its function is as follows. The phosphoenolpyruvate-dependent sugar phosphotransferase system (sugar PTS), a major carbohydrate active transport system, catalyzes the phosphorylation of incoming sugar substrates concomitantly with their translocation across the cell membrane. The enzyme II complex composed of PtsG and Crr is involved in glucose transport. The sequence is that of PTS system glucose-specific EIIA component (crr) from Salmonella typhi.